Reading from the N-terminus, the 355-residue chain is MSGSTFGRVFRLTTYGESHGAGLGGVVDGCPAGIALTEAMIQAELDRRRPGQGGPAATARKEPDRVRLLSGVFEGRTTGTPVAFHVENTDQRSRDYGDIMHVYRPGHADVTYDAKYGRRDYRGGGRSSGRETLSRVAGGAVAQALLAECGITVNAFTVELGGVPARPEDPAGAQDRPFFAPEEDIVAQWDALVRNVKGRGDTVGGIVQVEAYGVPAGLGEPVFDRLDARLACALMSVGAVKGVEIGAGFAAARLTGSSNNDAMTARGYAGNNAGGILGGISSGQTVVARAAVKPIPSVAQEQHTVDDSGREVILRVGGRHDISAIPRIVPVLKAMTALTLADMLLMQRRMTAVRA.

Position 48 (arginine 48) interacts with NADP(+). Residues 126–128 (RSS), glycine 278, 293–297 (KPIPS), and arginine 319 each bind FMN.

The protein belongs to the chorismate synthase family. As to quaternary structure, homotetramer. FMNH2 is required as a cofactor.

It catalyses the reaction 5-O-(1-carboxyvinyl)-3-phosphoshikimate = chorismate + phosphate. It functions in the pathway metabolic intermediate biosynthesis; chorismate biosynthesis; chorismate from D-erythrose 4-phosphate and phosphoenolpyruvate: step 7/7. Its function is as follows. Catalyzes the anti-1,4-elimination of the C-3 phosphate and the C-6 proR hydrogen from 5-enolpyruvylshikimate-3-phosphate (EPSP) to yield chorismate, which is the branch point compound that serves as the starting substrate for the three terminal pathways of aromatic amino acid biosynthesis. This reaction introduces a second double bond into the aromatic ring system. The sequence is that of Chorismate synthase from Oleidesulfovibrio alaskensis (strain ATCC BAA-1058 / DSM 17464 / G20) (Desulfovibrio alaskensis).